A 402-amino-acid polypeptide reads, in one-letter code: N-acetyllactosaminide beta-1,6-N-acetylglucosaminyl-transferase (402 aa).

At 1-7 the chain is on the cytoplasmic side; that stretch reads MMGSWKH. A helical; Signal-anchor for type II membrane protein membrane pass occupies residues 8-23; it reads CLFSASLISALIFVFV. Over 24–400 the chain is Lumenal; the sequence is YNTELWENKR…QSETAIQPSW (377 aa). A glycan (N-linked (GlcNAc...) asparagine) is linked at Asn-41.

The protein belongs to the glycosyltransferase 14 family. As to expression, expressed in lens epithelium cells. Expressed in reticulocytes.

The protein resides in the golgi apparatus membrane. The enzyme catalyses a beta-D-Gal-(1-&gt;4)-beta-D-GlcNAc-(1-&gt;3)-beta-D-Gal-(1-&gt;4)-beta-D-GlcNAc derivative + UDP-N-acetyl-alpha-D-glucosamine = a beta-D-Gal-(1-&gt;4)-beta-D-GlcNAc-(1-&gt;3)-[beta-D-GlcNAc-(1-&gt;6)]-beta-D-Gal-(1-&gt;4)-N-acetyl-beta-D-glucosaminyl derivative + UDP + H(+). The protein operates within protein modification; protein glycosylation. Branching enzyme that converts linear into branched poly-N-acetyllactosaminoglycans. Introduces the blood group I antigen during embryonic development. It is closely associated with the development and maturation of erythroid cells. In terms of biological role, determines the expression of the blood group I antigen in erythrocytes. This chain is N-acetyllactosaminide beta-1,6-N-acetylglucosaminyl-transferase (GCNT2), found in Homo sapiens (Human).